Reading from the N-terminus, the 434-residue chain is Ataxin-10 homolog (434 aa).

Belongs to the ataxin-10 family.

The protein localises to the cytoplasm. It is found in the nucleus. May play a role in the regulation of cytokinesis. The protein is Ataxin-10 homolog (mug160) of Schizosaccharomyces pombe (strain 972 / ATCC 24843) (Fission yeast).